Here is a 378-residue protein sequence, read N- to C-terminus: uncharacterized protein (378 aa).

6 residues coordinate Zn(2+): Cys38, His60, Cys90, Cys93, Cys96, and Cys104.

Belongs to the zinc-containing alcohol dehydrogenase family. Class-III subfamily. Zn(2+) serves as cofactor.

This is an uncharacterized protein from Bacillus subtilis (strain 168).